The sequence spans 343 residues: Melanoma-associated antigen B18 (343 aa).

A compositionally biased stretch (basic residues) spans 1–17 (MPRGQKSKLRAREKRHQ). A disordered region spans residues 1–102 (MPRGQKSKLR…LGSSREAEGW (102 aa)). The segment covering 67-87 (APSTTNAIAPVSCSSNEGASS) has biased composition (polar residues). A compositionally biased stretch (basic and acidic residues) spans 88 to 102 (QDEKSLGSSREAEGW). The tract at residues 100-343 (EGWKEDPLNK…TTSSSFSHAK (244 aa)) is interaction with LNX1. An MAGE domain is found at 107-306 (LNKKVVSLVH…SAFPSCYEEA (200 aa)). The interval 313–343 (RTQARAAARAHTAAMANARSRTTSSSFSHAK) is disordered. The segment covering 316–333 (ARAAARAHTAAMANARSR) has biased composition (low complexity). Polar residues predominate over residues 334–343 (TTSSSFSHAK).

In terms of assembly, interacts with LNX1.

It is found in the cytoplasm. Functionally, may enhance ubiquitin ligase activity of RING-type zinc finger-containing E3 ubiquitin-protein ligases. Proposed to act through recruitment and/or stabilization of the Ubl-conjugating enzyme (E2) at the E3:substrate complex. This is Melanoma-associated antigen B18 (MAGEB18) from Homo sapiens (Human).